We begin with the raw amino-acid sequence, 234 residues long: Demethylmenaquinone methyltransferase (234 aa).

S-adenosyl-L-methionine is bound by residues Thr-62, Asp-80, 100 to 101, and Ser-117; that span reads DA.

It belongs to the class I-like SAM-binding methyltransferase superfamily. MenG/UbiE family.

The enzyme catalyses a 2-demethylmenaquinol + S-adenosyl-L-methionine = a menaquinol + S-adenosyl-L-homocysteine + H(+). Its pathway is quinol/quinone metabolism; menaquinone biosynthesis; menaquinol from 1,4-dihydroxy-2-naphthoate: step 2/2. Functionally, methyltransferase required for the conversion of demethylmenaquinol (DMKH2) to menaquinol (MKH2). The polypeptide is Demethylmenaquinone methyltransferase (Mycobacterium bovis (strain ATCC BAA-935 / AF2122/97)).